Consider the following 251-residue polypeptide: Triosephosphate isomerase (251 aa).

Residue 9-11 (NWK) participates in substrate binding. Histidine 96 functions as the Electrophile in the catalytic mechanism. Glutamate 168 (proton acceptor) is an active-site residue. Substrate-binding positions include glycine 174, serine 214, and 235–236 (GG).

This sequence belongs to the triosephosphate isomerase family. Homodimer.

It localises to the cytoplasm. It carries out the reaction D-glyceraldehyde 3-phosphate = dihydroxyacetone phosphate. The protein operates within carbohydrate biosynthesis; gluconeogenesis. It participates in carbohydrate degradation; glycolysis; D-glyceraldehyde 3-phosphate from glycerone phosphate: step 1/1. Involved in the gluconeogenesis. Catalyzes stereospecifically the conversion of dihydroxyacetone phosphate (DHAP) to D-glyceraldehyde-3-phosphate (G3P). The protein is Triosephosphate isomerase of Cytophaga hutchinsonii (strain ATCC 33406 / DSM 1761 / CIP 103989 / NBRC 15051 / NCIMB 9469 / D465).